The primary structure comprises 258 residues: Phosphosulfolactate synthase (258 aa).

The protein belongs to the phosphosulfolactate synthase family.

It carries out the reaction (2R)-O-phospho-3-sulfolactate = phosphoenolpyruvate + sulfite + H(+). It participates in cofactor biosynthesis; coenzyme M biosynthesis; sulfoacetaldehyde from phosphoenolpyruvate and sulfite: step 1/4. Catalyzes the addition of sulfite to phosphoenolpyruvate (PEP) to yield (2R)-phospho-3-sulfolactate (PSL). This chain is Phosphosulfolactate synthase (comA), found in Methanothermobacter thermautotrophicus (strain ATCC 29096 / DSM 1053 / JCM 10044 / NBRC 100330 / Delta H) (Methanobacterium thermoautotrophicum).